A 119-amino-acid chain; its full sequence is MIAMVSKQPRKQRKARYAAPLHIRQKFMGARLSEALTKEYGTRSAAVITGDTVKVMRGDFKGTEGKVQSVSLMDGTITVDGVISTKVDGTEVPRPLNPSNVMITKLEMKDGRRASSIKK.

This sequence belongs to the universal ribosomal protein uL24 family. Part of the 50S ribosomal subunit.

One of two assembly initiator proteins, it binds directly to the 5'-end of the 23S rRNA, where it nucleates assembly of the 50S subunit. Functionally, located at the polypeptide exit tunnel on the outside of the subunit. This is Large ribosomal subunit protein uL24 from Methanosarcina acetivorans (strain ATCC 35395 / DSM 2834 / JCM 12185 / C2A).